The following is a 430-amino-acid chain: Gamma-glutamyl phosphate reductase (430 aa).

It belongs to the gamma-glutamyl phosphate reductase family.

The protein resides in the cytoplasm. The catalysed reaction is L-glutamate 5-semialdehyde + phosphate + NADP(+) = L-glutamyl 5-phosphate + NADPH + H(+). Its pathway is amino-acid biosynthesis; L-proline biosynthesis; L-glutamate 5-semialdehyde from L-glutamate: step 2/2. Catalyzes the NADPH-dependent reduction of L-glutamate 5-phosphate into L-glutamate 5-semialdehyde and phosphate. The product spontaneously undergoes cyclization to form 1-pyrroline-5-carboxylate. The protein is Gamma-glutamyl phosphate reductase of Corynebacterium diphtheriae (strain ATCC 700971 / NCTC 13129 / Biotype gravis).